The following is a 254-amino-acid chain: 3-deoxy-manno-octulosonate cytidylyltransferase (254 aa).

The protein belongs to the KdsB family.

It is found in the cytoplasm. It catalyses the reaction 3-deoxy-alpha-D-manno-oct-2-ulosonate + CTP = CMP-3-deoxy-beta-D-manno-octulosonate + diphosphate. The protein operates within nucleotide-sugar biosynthesis; CMP-3-deoxy-D-manno-octulosonate biosynthesis; CMP-3-deoxy-D-manno-octulosonate from 3-deoxy-D-manno-octulosonate and CTP: step 1/1. It participates in bacterial outer membrane biogenesis; lipopolysaccharide biosynthesis. Activates KDO (a required 8-carbon sugar) for incorporation into bacterial lipopolysaccharide in Gram-negative bacteria. The chain is 3-deoxy-manno-octulosonate cytidylyltransferase from Haemophilus influenzae (strain ATCC 51907 / DSM 11121 / KW20 / Rd).